A 217-amino-acid chain; its full sequence is Pro-Pro endopeptidase (217 aa).

An N-terminal signal peptide occupies residues 1–27; that stretch reads MKWDKRVVALILAVMIVCPLFAAPAHA. In terms of domain architecture, ATLF-like spans 30-216; the sequence is QSILDKLVVL…TYEFMAKLFA (187 aa). Positions 112-115 are plays a crucial role in substrate specificity; it reads SERV. His137 serves as a coordination point for Zn(2+). Residue Glu138 is the Proton acceptor of the active site. 3 residues coordinate Zn(2+): His141, Tyr174, and Glu181.

It belongs to the peptidase M34 family. Pro-Pro endopeptidase subfamily. In terms of assembly, monomer. It depends on Zn(2+) as a cofactor.

It is found in the secreted. The catalysed reaction is The enzyme catalyzes the hydrolytic cleavage of peptide bonds between two proline residues.. Zinc-dependent endoprotease with a unique preference for proline residues surrounding the scissile bond, which cleaves in a PLP-|-PVP motif. Cleaves the cell surface protein encoded by an adjacent gene, which contains two PPEP-2 cleaving sites and putative extracellular matrix-binding domains. Thereby, may have a role in the regulation of P.alvei adhesion. Is not able to cleave within the PVP-|-PVQ motif, and only shows a very poor cleavage of the VNP-|-PVP motif in vitro, which is the optimal substrate peptide for PPEP-1 from P.difficile. This is Pro-Pro endopeptidase from Paenibacillus alvei (strain ATCC 6344 / DSM 29 / NBRC 3343 / NCIMB 9371 / NCTC 6352) (Bacillus alvei).